The chain runs to 809 residues: Poly(A) polymerase (809 aa).

A disordered region spans residues 1–50 (MNKNGGPPVANITTSSTTITSTTTTQAKSQLPSSLSVNNLHTTQGSTDQP). The span at 12–25 (ITTSSTTITSTTTT) shows a compositional bias: low complexity. The segment covering 26–50 (QAKSQLPSSLSVNNLHTTQGSTDQP) has biased composition (polar residues). Residues 133 to 135 (FGS), 146 to 148 (DID), Asp-200, Lys-262, Tyr-271, and 280 to 281 (GV) each bind ATP. 3 residues coordinate Mg(2+): Asp-146, Asp-148, and Asp-200. 2 disordered regions span residues 529 to 760 (FVKD…QQIQ) and 785 to 809 (ISSS…IRGN). Residues 530-540 (VKDEGPEEPVK) are compositionally biased toward basic and acidic residues. The span at 572-655 (SPITTNINST…TPPTTTTINS (84 aa)) shows a compositional bias: low complexity. Polar residues predominate over residues 656-665 (VQPPSAQPTE). Positions 666 to 706 (NGSSTSNSPTSTSINNTALPPNPTTNSESTIETTITLPTTL) are enriched in low complexity. The span at 707–735 (ESQTSTLKDSNEISTNGTAVATEPTITSP) shows a compositional bias: polar residues. 2 stretches are compositionally biased toward low complexity: residues 736–760 (SVNI…QQIQ) and 785–794 (ISSSSETSQS).

Belongs to the poly(A) polymerase family. Mg(2+) serves as cofactor. Requires Mn(2+) as cofactor.

The protein resides in the nucleus. It carries out the reaction RNA(n) + ATP = RNA(n)-3'-adenine ribonucleotide + diphosphate. Polymerase that creates the 3'-poly(A) tail of mRNA's. May acquire specificity through interaction with a cleavage and polyadenylation factor. The sequence is that of Poly(A) polymerase (papA) from Dictyostelium discoideum (Social amoeba).